Here is a 354-residue protein sequence, read N- to C-terminus: Histidinol-phosphate aminotransferase (354 aa).

Lysine 210 carries the post-translational modification N6-(pyridoxal phosphate)lysine.

This sequence belongs to the class-II pyridoxal-phosphate-dependent aminotransferase family. Histidinol-phosphate aminotransferase subfamily. In terms of assembly, homodimer. Pyridoxal 5'-phosphate is required as a cofactor.

It carries out the reaction L-histidinol phosphate + 2-oxoglutarate = 3-(imidazol-4-yl)-2-oxopropyl phosphate + L-glutamate. The protein operates within amino-acid biosynthesis; L-histidine biosynthesis; L-histidine from 5-phospho-alpha-D-ribose 1-diphosphate: step 7/9. In Clostridium botulinum (strain Langeland / NCTC 10281 / Type F), this protein is Histidinol-phosphate aminotransferase.